The following is an 804-amino-acid chain: Phenylalanine--tRNA ligase beta subunit (804 aa).

Positions 39–147 (GEGLDSVVTA…PDCEPGQPVF (109 aa)) constitute a tRNA-binding domain. A B5 domain is found at 401 to 480 (LAERKVTLAV…RLNGYDNIPV (80 aa)). Positions 458, 464, 467, and 468 each coordinate Mg(2+). The region spanning 711–804 (SRFPQVARDS…LIAKLGAEIR (94 aa)) is the FDX-ACB domain.

This sequence belongs to the phenylalanyl-tRNA synthetase beta subunit family. Type 1 subfamily. As to quaternary structure, tetramer of two alpha and two beta subunits. Mg(2+) is required as a cofactor.

Its subcellular location is the cytoplasm. The enzyme catalyses tRNA(Phe) + L-phenylalanine + ATP = L-phenylalanyl-tRNA(Phe) + AMP + diphosphate + H(+). The sequence is that of Phenylalanine--tRNA ligase beta subunit from Syntrophotalea carbinolica (strain DSM 2380 / NBRC 103641 / GraBd1) (Pelobacter carbinolicus).